The primary structure comprises 269 residues: MERYDNAFTELKARKEGAFVPFVTLGDPGPEQSLKIIDTLIAAGADALELGIPFSDPLADGPTIQSATLRAFASGVTPTQCFEMLATVRQKYPTIPIGLLMYANLVFNRGIDEFYAECARVGVDSVLIADVPIEESAPFRQAAMRHNIAPIFICPPNADDELLRQIASHGRGYTYLLSRAGVTGAENKAAVPLHHLVEKLAEYHAAPPLQGFGISSPEQVTAAIEANAAGAISGSAIVKIIEKNVDKPDQMLTELRDFVTVMKAATRHA.

Residues glutamate 49 and aspartate 60 each act as proton acceptor in the active site.

This sequence belongs to the TrpA family. In terms of assembly, tetramer of two alpha and two beta chains.

The enzyme catalyses (1S,2R)-1-C-(indol-3-yl)glycerol 3-phosphate + L-serine = D-glyceraldehyde 3-phosphate + L-tryptophan + H2O. It participates in amino-acid biosynthesis; L-tryptophan biosynthesis; L-tryptophan from chorismate: step 5/5. Functionally, the alpha subunit is responsible for the aldol cleavage of indoleglycerol phosphate to indole and glyceraldehyde 3-phosphate. The polypeptide is Tryptophan synthase alpha chain (Enterobacter sp. (strain 638)).